A 545-amino-acid polypeptide reads, in one-letter code: 4-coumarate--CoA ligase 2 (545 aa).

ATP is bound by residues Ser192, Ser193, Gly194, Thr195, Thr196, and Lys200. Residues Tyr242 and Ser246 each contribute to the (E)-4-coumaroyl-AMP site. Lys263 is a binding site for CoA. Residues 265-334 (DIAQFLELIP…AKFPNAKLGQ (70 aa)) are SBD1. (E)-4-coumaroyl-AMP contacts are provided by Ala312, Gln334, Gly335, Thr339, and Met347. Residues Gln334, Gly335, and Thr339 each contribute to the ATP site. An SBD2 region spans residues 335–402 (GYGMTEAGPV…IRGDQIMKGY (68 aa)). ATP is bound by residues Asp423 and Arg438. (E)-4-coumaroyl-AMP is bound by residues Lys440 and Lys444. CoA is bound by residues Lys446 and Gly447. Lys529 lines the ATP pocket.

It belongs to the ATP-dependent AMP-binding enzyme family. The cofactor is Mg(2+).

The catalysed reaction is (E)-4-coumarate + ATP + CoA = (E)-4-coumaroyl-CoA + AMP + diphosphate. It catalyses the reaction (E)-4-coumarate + ATP + H(+) = (E)-4-coumaroyl-AMP + diphosphate. It carries out the reaction (E)-4-coumaroyl-AMP + CoA = (E)-4-coumaroyl-CoA + AMP + H(+). Its pathway is phytoalexin biosynthesis; 3,4',5-trihydroxystilbene biosynthesis; 3,4',5-trihydroxystilbene from trans-4-coumarate: step 1/2. Its function is as follows. Carboxylate--CoA ligase that may use 4-coumarate as substrate. Follows a two-step reaction mechanism, wherein the carboxylate substrate first undergoes adenylation by ATP, followed by a thioesterification in the presence of CoA to yield the final CoA thioester. The chain is 4-coumarate--CoA ligase 2 (4CL2) from Solanum tuberosum (Potato).